Here is a 213-residue protein sequence, read N- to C-terminus: Uridine kinase (213 aa).

An ATP-binding site is contributed by 15-22 (GASASGKS).

Belongs to the uridine kinase family.

Its subcellular location is the cytoplasm. It carries out the reaction uridine + ATP = UMP + ADP + H(+). The catalysed reaction is cytidine + ATP = CMP + ADP + H(+). It participates in pyrimidine metabolism; CTP biosynthesis via salvage pathway; CTP from cytidine: step 1/3. Its pathway is pyrimidine metabolism; UMP biosynthesis via salvage pathway; UMP from uridine: step 1/1. The protein is Uridine kinase of Serratia proteamaculans (strain 568).